The sequence spans 507 residues: Bifunctional purine biosynthesis protein PurH (507 aa).

The region spanning Met1–Val144 is the MGS-like domain.

The protein belongs to the PurH family.

The enzyme catalyses (6R)-10-formyltetrahydrofolate + 5-amino-1-(5-phospho-beta-D-ribosyl)imidazole-4-carboxamide = 5-formamido-1-(5-phospho-D-ribosyl)imidazole-4-carboxamide + (6S)-5,6,7,8-tetrahydrofolate. It carries out the reaction IMP + H2O = 5-formamido-1-(5-phospho-D-ribosyl)imidazole-4-carboxamide. The protein operates within purine metabolism; IMP biosynthesis via de novo pathway; 5-formamido-1-(5-phospho-D-ribosyl)imidazole-4-carboxamide from 5-amino-1-(5-phospho-D-ribosyl)imidazole-4-carboxamide (10-formyl THF route): step 1/1. It participates in purine metabolism; IMP biosynthesis via de novo pathway; IMP from 5-formamido-1-(5-phospho-D-ribosyl)imidazole-4-carboxamide: step 1/1. The protein is Bifunctional purine biosynthesis protein PurH of Lacticaseibacillus casei (strain BL23) (Lactobacillus casei).